A 247-amino-acid chain; its full sequence is Ubiquinone biosynthesis O-methyltransferase (247 aa).

Residues Arg41, Gly72, Asp93, and Met136 each coordinate S-adenosyl-L-methionine.

Belongs to the methyltransferase superfamily. UbiG/COQ3 family.

It catalyses the reaction a 3-demethylubiquinol + S-adenosyl-L-methionine = a ubiquinol + S-adenosyl-L-homocysteine + H(+). It carries out the reaction a 3-(all-trans-polyprenyl)benzene-1,2-diol + S-adenosyl-L-methionine = a 2-methoxy-6-(all-trans-polyprenyl)phenol + S-adenosyl-L-homocysteine + H(+). It participates in cofactor biosynthesis; ubiquinone biosynthesis. Its function is as follows. O-methyltransferase that catalyzes the 2 O-methylation steps in the ubiquinone biosynthetic pathway. The sequence is that of Ubiquinone biosynthesis O-methyltransferase from Bartonella tribocorum (strain CIP 105476 / IBS 506).